The primary structure comprises 200 residues: 3-isopropylmalate dehydratase small subunit (200 aa).

This sequence belongs to the LeuD family. LeuD type 1 subfamily. As to quaternary structure, heterodimer of LeuC and LeuD.

The enzyme catalyses (2R,3S)-3-isopropylmalate = (2S)-2-isopropylmalate. Its pathway is amino-acid biosynthesis; L-leucine biosynthesis; L-leucine from 3-methyl-2-oxobutanoate: step 2/4. Its function is as follows. Catalyzes the isomerization between 2-isopropylmalate and 3-isopropylmalate, via the formation of 2-isopropylmaleate. This is 3-isopropylmalate dehydratase small subunit from Campylobacter jejuni (strain RM1221).